Reading from the N-terminus, the 132-residue chain is Small ribosomal subunit protein uS8 (132 aa).

It belongs to the universal ribosomal protein uS8 family. In terms of assembly, part of the 30S ribosomal subunit. Contacts proteins S5 and S12.

Its function is as follows. One of the primary rRNA binding proteins, it binds directly to 16S rRNA central domain where it helps coordinate assembly of the platform of the 30S subunit. The sequence is that of Small ribosomal subunit protein uS8 from Nitrobacter winogradskyi (strain ATCC 25391 / DSM 10237 / CIP 104748 / NCIMB 11846 / Nb-255).